A 265-amino-acid chain; its full sequence is Protein ENDO16 (265 aa).

A Cell attachment site motif is present at residues 25 to 27; the sequence is RGD. Residues 71-265 form a disordered region; it reads SPNAPSSQME…KEEEEEERSG (195 aa). A compositionally biased stretch (polar residues) spans 73 to 92; sequence NAPSSQMESEGSANPSTIGS. Repeat copies occupy residues 75-94, 105-124, 128-147, and 148-167. The tract at residues 75–257 is 6 X approximate repeats; it reads PSSQMESEGS…QSESEDPEKE (183 aa). Acidic residues-rich tracts occupy residues 112–125, 133–144, 152–169, 194–212, 222–243, and 250–265; these read EGSE…TEGA, ESEGGDQEESEG, MESE…DSGE, EVDE…EEPG, ESEG…EVIE, and ESED…ERSG. Tandem repeats lie at residues 217–236 and 238–257. The N-linked (GlcNAc...) asparagine glycan is linked to Asn-228.

In terms of tissue distribution, first expressed in the vegetal plate and progressively the expression becomes restricted to a subset of endodermal cells as development proceeds.

Its function is as follows. May be an adhesion molecule involved in gastrulation of the sea urchin embryo. This is Protein ENDO16 (ENDO16) from Strongylocentrotus purpuratus (Purple sea urchin).